We begin with the raw amino-acid sequence, 403 residues long: Ribosomal RNA large subunit methyltransferase I (403 aa).

A PUA domain is found at 9-88; sequence YPRLVLSKGR…ESIDIAFFTR (80 aa).

It belongs to the methyltransferase superfamily. RlmI family.

It is found in the cytoplasm. The catalysed reaction is cytidine(1962) in 23S rRNA + S-adenosyl-L-methionine = 5-methylcytidine(1962) in 23S rRNA + S-adenosyl-L-homocysteine + H(+). Functionally, specifically methylates the cytosine at position 1962 (m5C1962) of 23S rRNA. This Salmonella schwarzengrund (strain CVM19633) protein is Ribosomal RNA large subunit methyltransferase I.